A 310-amino-acid chain; its full sequence is Glutaminase 1 (310 aa).

The substrate site is built by S66, N117, E161, N168, Y192, Y244, and V262. K294 carries the post-translational modification N6-acetyllysine.

It belongs to the glutaminase family. Homotetramer.

It catalyses the reaction L-glutamine + H2O = L-glutamate + NH4(+). In Escherichia coli (strain K12), this protein is Glutaminase 1.